Here is a 152-residue protein sequence, read N- to C-terminus: MFP1 attachment factor 1 (152 aa).

2 disordered regions span residues 1–33 and 107–152; these read MAEI…PPTQ and DTVK…ETEP. Residues 12-115 form a WPP region; the sequence is TVTQETQNKP…IDTVKSRSAP (104 aa). Polar residues predominate over residues 134-152; that stretch reads EPSSASGLTGEVSSVETEP.

Interacts with WAP through its WPP domain. Binds to MFP1 and FPP proteins. Expressed in young tomato leaves, young fruits, and flowers (at protein level).

It localises to the nucleus envelope. It is found in the cytoplasm. The protein localises to the golgi apparatus. Its subcellular location is the nucleus. The protein resides in the nucleus matrix. This is MFP1 attachment factor 1 (MAF1) from Solanum lycopersicum (Tomato).